A 122-amino-acid polypeptide reads, in one-letter code: Large ribosomal subunit protein uL14 (122 aa).

Belongs to the universal ribosomal protein uL14 family. As to quaternary structure, part of the 50S ribosomal subunit. Forms a cluster with proteins L3 and L19. In the 70S ribosome, L14 and L19 interact and together make contacts with the 16S rRNA in bridges B5 and B8.

Its function is as follows. Binds to 23S rRNA. Forms part of two intersubunit bridges in the 70S ribosome. The protein is Large ribosomal subunit protein uL14 of Thermosipho melanesiensis (strain DSM 12029 / CIP 104789 / BI429).